Here is a 299-residue protein sequence, read N- to C-terminus: Porphobilinogen deaminase (299 aa).

S-(dipyrrolylmethanemethyl)cysteine is present on Cys242.

The protein belongs to the HMBS family. Monomer. Dipyrromethane serves as cofactor.

It carries out the reaction 4 porphobilinogen + H2O = hydroxymethylbilane + 4 NH4(+). Its pathway is porphyrin-containing compound metabolism; protoporphyrin-IX biosynthesis; coproporphyrinogen-III from 5-aminolevulinate: step 2/4. Its function is as follows. Tetrapolymerization of the monopyrrole PBG into the hydroxymethylbilane pre-uroporphyrinogen in several discrete steps. This chain is Porphobilinogen deaminase (hemC), found in Rickettsia prowazekii (strain Madrid E).